The primary structure comprises 349 residues: tRNA pseudouridine synthase D (349 aa).

Phe26 is a binding site for substrate. The active-site Nucleophile is Asp79. Position 128 (Asn128) interacts with substrate. In terms of domain architecture, TRUD spans 154-302 (GVPNYFGEQR…VEGCRRAILV (149 aa)). Position 328 (Phe328) interacts with substrate.

It belongs to the pseudouridine synthase TruD family.

It carries out the reaction uridine(13) in tRNA = pseudouridine(13) in tRNA. Its function is as follows. Responsible for synthesis of pseudouridine from uracil-13 in transfer RNAs. The polypeptide is tRNA pseudouridine synthase D (Photorhabdus laumondii subsp. laumondii (strain DSM 15139 / CIP 105565 / TT01) (Photorhabdus luminescens subsp. laumondii)).